The primary structure comprises 195 residues: SPI-2 type 3 secretion system translocon protein SctB (195 aa).

Residues 44–80 (KLMELAKKLRDIMRSYNVEKQRLAWELQVNVLQTQMK) are a coiled coil. A run of 3 helical transmembrane segments spans residues 90-110 (MITA…GAVG), 115-135 (LIAG…GAGV), and 170-190 (EIMQ…AEIL).

Belongs to the SctB/EspB family. The core secretion machinery of the T3SS is composed of approximately 20 different proteins, including cytoplasmic components, a base, an export apparatus and a needle. This subunit is involved in the formation of a pore, called the translocon, in host membrane. May form a complex with SseB and SseC/SctE2. SseB is required for correct localization of SseD/SctB2 on the bacterial cell surface. Binds to the chaperone SseA.

The protein resides in the secreted. Its subcellular location is the cell surface. The protein localises to the host membrane. In terms of biological role, component of the type III secretion system 2 (SPI-2 T3SS), also called injectisome, which is used to inject bacterial effector proteins into eukaryotic host cells. SseC/SctE2 and SseD/SctB2 are inserted into the host membrane where they form a pore and allow the translocation of effector proteins into the cytosol of target cells. Functionally, required for the translocation of SPI-2 effector proteins. Required for systemic Salmonella infection of the mouse. Essential for SpvB-induced actin depolymerization in the host cell cytoplasm. The chain is SPI-2 type 3 secretion system translocon protein SctB from Salmonella typhimurium (strain LT2 / SGSC1412 / ATCC 700720).